The following is a 205-amino-acid chain: Glycerol-3-phosphate acyltransferase (205 aa).

The next 6 helical transmembrane spans lie at 7-27, 54-74, 80-100, 116-136, 141-161, and 163-183; these read MTAL…VWVC, VVPA…VLWV, LPIW…SYPL, VLLM…ALLA, TAAV…YWLA, and EATL…AWNI.

The protein belongs to the PlsY family. Probably interacts with PlsX.

The protein resides in the cell inner membrane. The catalysed reaction is an acyl phosphate + sn-glycerol 3-phosphate = a 1-acyl-sn-glycero-3-phosphate + phosphate. The protein operates within lipid metabolism; phospholipid metabolism. Functionally, catalyzes the transfer of an acyl group from acyl-phosphate (acyl-PO(4)) to glycerol-3-phosphate (G3P) to form lysophosphatidic acid (LPA). This enzyme utilizes acyl-phosphate as fatty acyl donor, but not acyl-CoA or acyl-ACP. The polypeptide is Glycerol-3-phosphate acyltransferase (Chromohalobacter salexigens (strain ATCC BAA-138 / DSM 3043 / CIP 106854 / NCIMB 13768 / 1H11)).